Consider the following 213-residue polypeptide: Protein SRN2 (213 aa).

The VPS37 C-terminal domain occupies 128-213 (SKYVASWQDY…TWDKQGNLKY (86 aa)).

Belongs to the VPS37 family. In terms of assembly, component of the ESCRT-I complex (endosomal sorting complex required for transport I) which consists of STP22, VPS28, SRN2 and MVB12 in a 1:1:1:1 stoichiometry. Interacts with STP22 and MVB12.

It localises to the cytoplasm. The protein localises to the endosome. Its subcellular location is the late endosome membrane. In terms of biological role, component of the ESCRT-I complex, a regulator of vesicular trafficking process. Required for normal endocytic and biosynthetic traffic to the yeast vacuole. The protein is Protein SRN2 (SRN2) of Saccharomyces cerevisiae (strain ATCC 204508 / S288c) (Baker's yeast).